The following is a 102-amino-acid chain: Large ribosomal subunit protein bL21 (102 aa).

Belongs to the bacterial ribosomal protein bL21 family. Part of the 50S ribosomal subunit. Contacts protein L20.

In terms of biological role, this protein binds to 23S rRNA in the presence of protein L20. The protein is Large ribosomal subunit protein bL21 of Myxococcus xanthus (strain DK1622).